The primary structure comprises 436 residues: MVLPTVAIVGRPNVGKSTLFNRIAGERISIVEDVEGVTRDRIYATGEWLNRKFSLIDTGGIDDVDAPFMEQIKHQAQIAMDEADVIVFVVSGKEGVTDADEYVAKMLYRTNKPVILAVNKVDNPEMRNDIYDFYALGLGDPYPASSVHGIGTGDILDAIIEKLPVEEEEINDNTIRFSLIGRPNVGKSSLINAILGEERVIASPVAGTTRDAIDTHFTDQDGQEYNMIDTAGMRKSGKVYENTEKYSVMRAMRAIDRSDVVLLVINAEEGIREYDKRIAGFAHEAGKGMIIVVNKWDLLEKDNHTVAKWEADIRDQFQFLSYAPIIFVSALTKQRLNKLPELIKKISESQNKRIPSAVLNDVIMDAIAINPTPTDKGKRLKIFYATQVSVKPPTFVIFVNEEELMHFSYLRFLENQIRAAFTFEGTPIHLIARKRK.

2 consecutive EngA-type G domains span residues 4-167 (PTVA…PVEE) and 175-351 (IRFS…ESQN). Residues 10 to 17 (GRPNVGKS), 57 to 61 (DTGGI), 119 to 122 (NKVD), 181 to 188 (GRPNVGKS), 229 to 233 (DTAGM), and 294 to 297 (NKWD) each bind GTP. One can recognise a KH-like domain in the interval 352–436 (KRIPSAVLND…PIHLIARKRK (85 aa)).

The protein belongs to the TRAFAC class TrmE-Era-EngA-EngB-Septin-like GTPase superfamily. EngA (Der) GTPase family. In terms of assembly, associates with the 50S ribosomal subunit.

In terms of biological role, GTPase that plays an essential role in the late steps of ribosome biogenesis. The chain is GTPase Der from Streptococcus uberis (strain ATCC BAA-854 / 0140J).